We begin with the raw amino-acid sequence, 397 residues long: Tryptophan synthase beta chain (397 aa).

K86 bears the N6-(pyridoxal phosphate)lysine mark.

The protein belongs to the TrpB family. As to quaternary structure, tetramer of two alpha and two beta chains. Pyridoxal 5'-phosphate is required as a cofactor.

It carries out the reaction (1S,2R)-1-C-(indol-3-yl)glycerol 3-phosphate + L-serine = D-glyceraldehyde 3-phosphate + L-tryptophan + H2O. Its pathway is amino-acid biosynthesis; L-tryptophan biosynthesis; L-tryptophan from chorismate: step 5/5. The beta subunit is responsible for the synthesis of L-tryptophan from indole and L-serine. The chain is Tryptophan synthase beta chain from Tolumonas auensis (strain DSM 9187 / NBRC 110442 / TA 4).